The chain runs to 277 residues: Caspase-3 (277 aa).

Residue methionine 1 is modified to N-acetylmethionine. 2 consecutive propeptides follow at residues 1–9 (MENNKTSVD) and 10–28 (SKSI…KSVD). Lysine 11 is modified (N6-acetyllysine). Position 26 is a phosphoserine (serine 26). Active-site residues include histidine 121 and cysteine 163. An S-nitrosocysteine; in inhibited form modification is found at cysteine 163.

It belongs to the peptidase C14A family. As to quaternary structure, heterotetramer that consists of two anti-parallel arranged heterodimers, each one formed by a 17 kDa (p17) and a 12 kDa (p12) subunit. Interacts with BIRC6/bruce. Cleavage by granzyme B, caspase-6, caspase-8 and caspase-10 generates the two active subunits. Additional processing of the propeptides is likely due to the autocatalytic activity of the activated protease. Active heterodimers between the small subunit of caspase-7 protease and the large subunit of caspase-3 also occur and vice versa. In terms of processing, S-nitrosylated on its catalytic site cysteine in unstimulated cell lines and denitrosylated upon activation of the Fas apoptotic pathway, associated with an increase in intracellular caspase activity. Fas therefore activates caspase-3 not only by inducing the cleavage of the caspase zymogen to its active subunits, but also by stimulating the denitrosylation of its active site thiol. Post-translationally, ubiquitinated by BIRC6; this activity is inhibited by DIABLO/SMAC. Highest expression in spleen, lung, liver, kidney and heart. Lower expression in brain, skeletal muscle and testis.

It is found in the cytoplasm. The catalysed reaction is Strict requirement for an Asp residue at positions P1 and P4. It has a preferred cleavage sequence of Asp-Xaa-Xaa-Asp-|- with a hydrophobic amino-acid residue at P2 and a hydrophilic amino-acid residue at P3, although Val or Ala are also accepted at this position.. Its activity is regulated as follows. Inhibited by BIRC6; following inhibition of BIRC6-caspase binding by DIABLO/SMAC, BIRC6 is subjected to caspase cleavage, leading to an increase in active caspases. Functionally, thiol protease that acts as a major effector caspase involved in the execution phase of apoptosis. Following cleavage and activation by initiator caspases (CASP8, CASP9 and/or CASP10), mediates execution of apoptosis by catalyzing cleavage of many proteins. At the onset of apoptosis, it proteolytically cleaves poly(ADP-ribose) polymerase PARP1 at a '216-Asp-|-Gly-217' bond. Cleaves and activates sterol regulatory element binding proteins (SREBPs) between the basic helix-loop-helix leucine zipper domain and the membrane attachment domain. Cleaves and activates caspase-6, -7 and -9 (CASP6, CASP7 and CASP9, respectively). Cleaves and inactivates interleukin-18 (IL18). Triggers cell adhesion in sympathetic neurons through RET cleavage. Cleaves IL-1 beta between an Asp and an Ala, releasing the mature cytokine which is involved in a variety of inflammatory processes. Cleaves and inhibits serine/threonine-protein kinase AKT1 in response to oxidative stress. Acts as an inhibitor of type I interferon production during virus-induced apoptosis by mediating cleavage of antiviral proteins CGAS, IRF3 and MAVS, thereby preventing cytokine overproduction. Also involved in pyroptosis by mediating cleavage and activation of gasdermin-E (GSDME). Cleaves XRCC4 and phospholipid scramblase proteins XKR4, XKR8 and XKR9, leading to promote phosphatidylserine exposure on apoptotic cell surface. Cleaves BIRC6 following inhibition of BIRC6-caspase binding by DIABLO/SMAC. This Mus musculus (Mouse) protein is Caspase-3 (Casp3).